The following is a 716-amino-acid chain: 1,4-alpha-glucan branching enzyme GlgB (716 aa).

Asp399 acts as the Nucleophile in catalysis. Glu452 serves as the catalytic Proton donor.

This sequence belongs to the glycosyl hydrolase 13 family. GlgB subfamily. Monomer.

The enzyme catalyses Transfers a segment of a (1-&gt;4)-alpha-D-glucan chain to a primary hydroxy group in a similar glucan chain.. The protein operates within glycan biosynthesis; glycogen biosynthesis. Functionally, catalyzes the formation of the alpha-1,6-glucosidic linkages in glycogen by scission of a 1,4-alpha-linked oligosaccharide from growing alpha-1,4-glucan chains and the subsequent attachment of the oligosaccharide to the alpha-1,6 position. This Rhodopseudomonas palustris (strain HaA2) protein is 1,4-alpha-glucan branching enzyme GlgB.